The sequence spans 507 residues: MLNADLKQQLKQLLELMEGNVEFVASLGSDDKSKELKDLLTEITDMSPRLSLSEKSLKRTPSFSVNRPGEETGVTFAGIPLGHEFNSLVLAILQVSGRAPKEKQSIIDQIKKLEGSFHFETFISLTCQKCPDVVQALNLMSVINPNITHSMIDGAVFREESENIMAVPAVFLNGEEFGNGRMTIQDILSKLGSTADASEFENKEPYDVLIVGGGPASGSAAIYTARKGLRTGIVADRIGGQVNDTAGIENFITVKETTGSEFSSNLAAHIDQYDIDAMTGIRATDIEKTDEAIKVTLENGAVLESKTVIIATGAGWRKLNIPGEEQLINKGVAFCPHCDGPLFENKDVAVIGGGNSGVEAAIDLAGIVNHVTLFEFASELKADNVLQDRLRSLSNVDIKTNAKTTEVVGEDHVTGIRYEDMNTGEEHLLNLDGIFVQIGLLPNTSWLNDAVELNERGEIVIDRNNNTNVPGIFAAGDVTDQKNKQIIISMGAGANAALNAFDYIIRN.

207 to 222 is a binding site for FAD; the sequence is DVLIVGGGPASGSAAI. An intrachain disulfide couples Cys335 to Cys338. Position 347 to 361 (347 to 361) interacts with NAD(+); it reads DVAVIGGGNSGVEAA. Position 467-477 (467-477) interacts with FAD; the sequence is TNVPGIFAAGD.

This sequence belongs to the class-II pyridine nucleotide-disulfide oxidoreductase family. As to quaternary structure, homodimer. The cofactor is FAD.

Serves to protect the cell against DNA damage by alkyl hydroperoxides. It can use either NADH or NADPH as electron donor for direct reduction of redox dyes or of alkyl hydroperoxides when combined with the AhpC protein. The chain is Alkyl hydroperoxide reductase subunit F (ahpF) from Staphylococcus aureus (strain NCTC 8325 / PS 47).